The chain runs to 517 residues: UDP-N-acetylmuramoyl-tripeptide--D-alanyl-D-alanine ligase (517 aa).

ATP is bound at residue 138–144 (GSSGKTS).

It belongs to the MurCDEF family. MurF subfamily.

It localises to the cytoplasm. It carries out the reaction D-alanyl-D-alanine + UDP-N-acetyl-alpha-D-muramoyl-L-alanyl-gamma-D-glutamyl-meso-2,6-diaminopimelate + ATP = UDP-N-acetyl-alpha-D-muramoyl-L-alanyl-gamma-D-glutamyl-meso-2,6-diaminopimeloyl-D-alanyl-D-alanine + ADP + phosphate + H(+). The protein operates within cell wall biogenesis; peptidoglycan biosynthesis. Functionally, involved in cell wall formation. Catalyzes the final step in the synthesis of UDP-N-acetylmuramoyl-pentapeptide, the precursor of murein. The protein is UDP-N-acetylmuramoyl-tripeptide--D-alanyl-D-alanine ligase of Mycobacterium leprae (strain TN).